Here is a 673-residue protein sequence, read N- to C-terminus: Protein-arginine deiminase type-2 (673 aa).

Methionine 1 carries the post-translational modification N-acetylmethionine. 12 residues coordinate Ca(2+): aspartate 131, aspartate 133, aspartate 135, glutamate 139, asparagine 162, aspartate 164, aspartate 166, aspartate 174, aspartate 177, lysine 179, aspartate 185, and aspartate 188. A Citrulline modification is found at arginine 352. Glutamate 362, aspartate 397, phenylalanine 416, leucine 419, and glutamate 420 together coordinate Ca(2+). The active-site Nucleophile is cysteine 655.

The protein belongs to the protein arginine deiminase family. In terms of assembly, homodimer. It depends on Ca(2+) as a cofactor. As to expression, expressed in various tissues including muscle, uterus, spinal cord, salivary gland and pancreas.

The protein localises to the cytoplasm. The enzyme catalyses L-arginyl-[protein] + H2O = L-citrullyl-[protein] + NH4(+). Its function is as follows. Catalyzes the deimination of arginine residues of proteins. The sequence is that of Protein-arginine deiminase type-2 (Padi2) from Mus musculus (Mouse).